The following is an 85-amino-acid chain: Large ribosomal subunit protein bL27 (85 aa).

Residues 1–23 (MAHKKGQGSTQNNRDSAGRRLGV) are disordered.

The protein belongs to the bacterial ribosomal protein bL27 family.

In Helicobacter hepaticus (strain ATCC 51449 / 3B1), this protein is Large ribosomal subunit protein bL27.